A 223-amino-acid polypeptide reads, in one-letter code: Twisted gastrulation protein homolog 1 (223 aa).

A signal peptide spans 1-25 (MKLHYVAVLTLAILMFLTWLPASLS). Asn-52 and Asn-81 each carry an N-linked (GlcNAc...) asparagine glycan.

Belongs to the twisted gastrulation protein family. As to quaternary structure, interacts with CHRD and BMP4. This interaction enhances CHRD/BMP4 complex formation. Interacts with BMP7.

The protein resides in the secreted. May be involved in dorsoventral axis formation. Seems to antagonize BMP signaling by forming ternary complexes with CHRD and BMPs, thereby preventing BMPs from binding to their receptors. In addition to the anti-BMP function, also has pro-BMP activity, partly mediated by cleavage and degradation of CHRD, which releases BMPs from ternary complexes. May be an important modulator of BMP-regulated cartilage development and chondrocyte differentiation. May play a role in thymocyte development. The polypeptide is Twisted gastrulation protein homolog 1 (TWSG1) (Pongo abelii (Sumatran orangutan)).